We begin with the raw amino-acid sequence, 537 residues long: Beta-galactoside alpha-2,6-sialyltransferase 2 (537 aa).

Residues M1 to R10 lie on the Cytoplasmic side of the membrane. Residues L11–L31 traverse the membrane as a helical; Signal-anchor for type II membrane protein segment. Residues D32–I537 lie on the Lumenal side of the membrane. Disordered regions lie at residues T83–I117 and G134–S202. Polar residues predominate over residues G134 to V145. Over residues E166 to V185 the composition is skewed to acidic residues. Intrachain disulfides connect C265–C535, C312–C464, and C482–C493. 2 N-linked (GlcNAc...) asparagine glycosylation sites follow: N353 and N373.

This sequence belongs to the glycosyltransferase 29 family.

The protein localises to the golgi apparatus. The protein resides in the golgi stack membrane. The enzyme catalyses a beta-D-galactoside + CMP-N-acetyl-beta-neuraminate = an N-acetyl-alpha-neuraminyl-(2-&gt;6)-beta-D-galactosyl derivative + CMP + H(+). Functionally, transfers sialic acid from the donor of substrate CMP-sialic acid to galactose containing acceptor substrates. In Takifugu rubripes (Japanese pufferfish), this protein is Beta-galactoside alpha-2,6-sialyltransferase 2 (st6gal2).